A 262-amino-acid polypeptide reads, in one-letter code: Aminoglycoside 3'-phosphotransferase (262 aa).

Catalysis depends on D187, which acts as the Proton acceptor.

It belongs to the aminoglycoside phosphotransferase family. In terms of assembly, monomer.

It localises to the cytoplasm. It catalyses the reaction kanamycin A + ATP = kanamycin 3'-phosphate + ADP + H(+). Its function is as follows. Resistance to butirosin and structurally-related aminoglycosides, including kanamycin and amikacin. The sequence is that of Aminoglycoside 3'-phosphotransferase from Niallia circulans (Bacillus circulans).